The primary structure comprises 317 residues: ADP-L-glycero-D-manno-heptose-6-epimerase (317 aa).

Residues 10–11, 31–32, Gln38, Lys53, 75–79, and Asn92 each bind NADP(+); these read FI, DD, and QGACS. Tyr139 acts as the Proton acceptor in catalysis. An NADP(+)-binding site is contributed by Lys143. Residue Asn166 participates in substrate binding. 2 residues coordinate NADP(+): Val167 and Lys175. The Proton acceptor role is filled by Lys175. Substrate is bound by residues Gly177, His184, 198-201, Arg211, and Tyr275; that span reads FEGV.

Belongs to the NAD(P)-dependent epimerase/dehydratase family. HldD subfamily. Homopentamer. It depends on NADP(+) as a cofactor.

It catalyses the reaction ADP-D-glycero-beta-D-manno-heptose = ADP-L-glycero-beta-D-manno-heptose. The protein operates within nucleotide-sugar biosynthesis; ADP-L-glycero-beta-D-manno-heptose biosynthesis; ADP-L-glycero-beta-D-manno-heptose from D-glycero-beta-D-manno-heptose 7-phosphate: step 4/4. Functionally, catalyzes the interconversion between ADP-D-glycero-beta-D-manno-heptose and ADP-L-glycero-beta-D-manno-heptose via an epimerization at carbon 6 of the heptose. This chain is ADP-L-glycero-D-manno-heptose-6-epimerase, found in Shewanella frigidimarina (strain NCIMB 400).